Consider the following 396-residue polypeptide: Putative pyridoxal phosphate-dependent acyltransferase (396 aa).

Pyridoxal 5'-phosphate is bound at residue 111 to 112 (GF). His-136 serves as a coordination point for substrate. Residues Ser-186, 211–214 (DDAH), and 241–244 (TLSK) each bind pyridoxal 5'-phosphate. Position 244 is an N6-(pyridoxal phosphate)lysine (Lys-244). Thr-358 is a substrate binding site.

It belongs to the class-II pyridoxal-phosphate-dependent aminotransferase family. In terms of assembly, homodimer. Pyridoxal 5'-phosphate serves as cofactor.

The polypeptide is Putative pyridoxal phosphate-dependent acyltransferase (Bacillus cereus (strain ATCC 14579 / DSM 31 / CCUG 7414 / JCM 2152 / NBRC 15305 / NCIMB 9373 / NCTC 2599 / NRRL B-3711)).